Here is a 314-residue protein sequence, read N- to C-terminus: MTTLLIAEHDNASLKDATNKALTAAAALGADVEVLVAGEGAKAAADAAAKLAGVKKVLLADGALYAHDLAEPLAALIVSLAPSYDAIVAPATSRFKNVMPRVAALLDVMQVSEIIKVVAPDTYERPIYAGNAIQTVKSKDAKKVITVRTSTFAAAGEGGSAPVESVQAAADPGLSSFVGEEVAKSDRPELTSAKIIVSGGRAMQSRENFAKYIEPLADKLGAGVGASRAAVDAGYAPNDWQVGQTGKVVAPELYVAVGISGAIQHLAGMKDSKVIVAINKDEDAPIFQVADYGLVADLYQAVPELTAELGKLGK.

Leucine 253–aspartate 281 is an FAD binding site.

Belongs to the ETF alpha-subunit/FixB family. Heterodimer of an alpha and a beta subunit. It depends on FAD as a cofactor.

The electron transfer flavoprotein serves as a specific electron acceptor for other dehydrogenases. It transfers the electrons to the main respiratory chain via ETF-ubiquinone oxidoreductase (ETF dehydrogenase). This is Electron transfer flavoprotein subunit alpha (etfA) from Bradyrhizobium diazoefficiens (strain JCM 10833 / BCRC 13528 / IAM 13628 / NBRC 14792 / USDA 110).